We begin with the raw amino-acid sequence, 238 residues long: SH2 domain-containing adapter protein F (238 aa).

2 disordered regions span residues 1–70 (MEPY…PWEW) and 85–121 (GSEN…EPSS). A Phosphoserine modification is found at Ser39. Positions 55–66 (EDDERPPEEYDQ) are enriched in acidic residues. Phosphotyrosine is present on Tyr64. In terms of domain architecture, SH2 spans 138-233 (WYHGAISRTD…AEHMSLLYPV (96 aa)).

Interacts with phosphorylated 'Tyr-720' of PDGFRA via its SH2 domain. Post-translationally, may become phosphorylated upon binding to PDGFRA.

Functionally, adapter protein which may play a role in the regulation of apoptosis in response to PDGF. The chain is SH2 domain-containing adapter protein F from Mus musculus (Mouse).